The primary structure comprises 845 residues: Translation initiation factor IF-2 (845 aa).

Composition is skewed to basic and acidic residues over residues 139–198 (EAKR…EKPA) and 206–228 (FRSEDRESEQKQRGTKFGRKELH). Residues 139–253 (EAKRQAAEEE…PQKAAPAAKH (115 aa)) are disordered. The tr-type G domain occupies 345–512 (SRAAVVTIMG…AILLQAEVME (168 aa)). Positions 354-361 (GHVDHGKT) are G1. 354 to 361 (GHVDHGKT) lines the GTP pocket. Residues 379 to 383 (GITQH) form a G2 region. The interval 400-403 (DTPG) is G3. GTP is bound by residues 400 to 404 (DTPGH) and 454 to 457 (NKID). The G4 stretch occupies residues 454–457 (NKID). The G5 stretch occupies residues 490 to 492 (SAK).

This sequence belongs to the TRAFAC class translation factor GTPase superfamily. Classic translation factor GTPase family. IF-2 subfamily.

It is found in the cytoplasm. In terms of biological role, one of the essential components for the initiation of protein synthesis. Protects formylmethionyl-tRNA from spontaneous hydrolysis and promotes its binding to the 30S ribosomal subunits. Also involved in the hydrolysis of GTP during the formation of the 70S ribosomal complex. This chain is Translation initiation factor IF-2, found in Nitrosococcus oceani (strain ATCC 19707 / BCRC 17464 / JCM 30415 / NCIMB 11848 / C-107).